The sequence spans 883 residues: Brevican core protein (883 aa).

Residues 1 to 22 (MIPLLLSLLAALVLTQAPAALA) form the signal peptide. Positions 35-154 (FRVRIGAAQL…SSDAVEVKVK (120 aa)) constitute an Ig-like V-type domain. 5 cysteine pairs are disulfide-bonded: C56–C136, C178–C249, C202–C223, C276–C351, and C300–C321. An N-linked (GlcNAc...) asparagine glycan is attached at N129. Link domains are found at residues 156–251 (VVFL…YCYA) and 256–353 (GELF…YCFR). N-linked (GlcNAc...) asparagine glycosylation occurs at N336. The tract at residues 389–574 (QEAVESESRG…EDGPSLLPET (186 aa)) is disordered. S413 is modified (phosphoserine). A glycan (O-linked (Xyl...) (chondroitin sulfate) serine) is linked at S413. Polar residues predominate over residues 428 to 440 (ESETQSVAPPTGS). Acidic residues predominate over residues 441–451 (SEEEGEALEEE). Over residues 452–467 (ERFKDTETPKEEKEQE) the composition is skewed to basic and acidic residues. The GPI-anchor amidated serine moiety is linked to residue S622. In terms of domain architecture, EGF-like spans 622–658 (SSGDCIPSPCHNGGTCLEEKEGFRCLCVPGYGGDLCD). 7 disulfide bridges follow: C626–C637, C631–C646, C648–C657, C692–C784, C760–C776, C791–C834, and C820–C847. One can recognise a C-type lectin domain in the interval 658 to 786 (DVGLHFCSPG…NYHLSYTCKM (129 aa)). One can recognise a Sushi domain in the interval 789–849 (VSCGPPPQLP…WEAPQISCVP (61 aa)). Residues 859 to 883 (MTAPEGPRGQLPRQRKALLTPPSSL) form a disordered region.

The protein belongs to the aggrecan/versican proteoglycan family. As to quaternary structure, interacts with TNR. O-glycosylated; contains chondroitin sulfate. Brain.

The protein localises to the secreted. It is found in the extracellular space. It localises to the extracellular matrix. Its subcellular location is the membrane. Its function is as follows. May play a role in the terminally differentiating and the adult nervous system during postnatal development. Could stabilize interactions between hyaluronan (HA) and brain proteoglycans. Isoform 2 may function as a chondroitin sulfate-bearing cell surface receptor. The chain is Brevican core protein (Bcan) from Rattus norvegicus (Rat).